Consider the following 542-residue polypeptide: Pre-mRNA-splicing factor 38B (542 aa).

Positions 1-12 are enriched in polar residues; it reads MANNSPALTGNS. The tract at residues 1–24 is disordered; the sequence is MANNSPALTGNSQPQHQAAAAVVQ. A2 bears the N-acetylalanine mark. Position 5 is a phosphoserine (S5). Positions 13 to 24 are enriched in low complexity; the sequence is QPQHQAAAAVVQ. An N6-acetyllysine modification is found at K227. Residues 232-542 are disordered; that stretch reads QIKTRPRKIK…KEHKNKDETV (311 aa). The segment covering 243 to 255 has biased composition (basic and acidic residues); that stretch reads DGKEGVEEIDRHI. Residues 256 to 284 are compositionally biased toward basic residues; it reads ERRRSRSPRRSLSPRRSPRRSRSRSHHRD. A phosphoserine mark is found at S288, S290, S318, and S320. Residues 291-327 are compositionally biased toward basic and acidic residues; that stretch reads FDRELEREKERQRLEREAKEREKERRRSRSLDRGLDR. Positions 292 to 323 form a coiled coil; the sequence is DRELEREKERQRLEREAKEREKERRRSRSLDR. The segment covering 328–344 has biased composition (basic residues); that stretch reads RRSRSRERHRSRSRSRD. Over residues 345 to 418 the composition is skewed to basic and acidic residues; it reads RKGDRRDRDR…DRRHRDDKKE (74 aa). The span at 419 to 448 shows a compositional bias: basic residues; the sequence is SKKKHSRSRSRERKHRSRSRSRNAGKRSRS. Position 446 is a phosphoserine (S446). The segment covering 449 to 466 has biased composition (basic and acidic residues); the sequence is RSKDKASKHKNESKEKSN. S471, S473, and S479 each carry phosphoserine. 2 stretches are compositionally biased toward basic and acidic residues: residues 479–492 and 499–522; these read SVEKRKREHSPSRE and RSQDRSHKRDHDSKDQSDRQDHQR. 3 positions are modified to phosphoserine: S523, S525, and S530. Basic and acidic residues predominate over residues 530–542; that stretch reads SQEKEHKNKDETV.

It belongs to the PRP38 family.

The protein localises to the nucleus. Functionally, may be required for pre-mRNA splicing. This chain is Pre-mRNA-splicing factor 38B (Prpf38b), found in Rattus norvegicus (Rat).